Reading from the N-terminus, the 475-residue chain is Bifunctional protein HldE (475 aa).

The segment at 1-318 (MKVTLPDFER…ENAVRGRAET (318 aa)) is ribokinase. 195–198 (NLSE) is a binding site for ATP. The active site involves Asp-264. The tract at residues 344 to 475 (MTNGVFDILH…NIIKKIQKNS (132 aa)) is cytidylyltransferase.

It in the N-terminal section; belongs to the carbohydrate kinase PfkB family. This sequence in the C-terminal section; belongs to the cytidylyltransferase family. Homodimer.

It catalyses the reaction D-glycero-beta-D-manno-heptose 7-phosphate + ATP = D-glycero-beta-D-manno-heptose 1,7-bisphosphate + ADP + H(+). The catalysed reaction is D-glycero-beta-D-manno-heptose 1-phosphate + ATP + H(+) = ADP-D-glycero-beta-D-manno-heptose + diphosphate. It functions in the pathway nucleotide-sugar biosynthesis; ADP-L-glycero-beta-D-manno-heptose biosynthesis; ADP-L-glycero-beta-D-manno-heptose from D-glycero-beta-D-manno-heptose 7-phosphate: step 1/4. Its pathway is nucleotide-sugar biosynthesis; ADP-L-glycero-beta-D-manno-heptose biosynthesis; ADP-L-glycero-beta-D-manno-heptose from D-glycero-beta-D-manno-heptose 7-phosphate: step 3/4. Catalyzes the phosphorylation of D-glycero-D-manno-heptose 7-phosphate at the C-1 position to selectively form D-glycero-beta-D-manno-heptose-1,7-bisphosphate. Its function is as follows. Catalyzes the ADP transfer from ATP to D-glycero-beta-D-manno-heptose 1-phosphate, yielding ADP-D-glycero-beta-D-manno-heptose. The chain is Bifunctional protein HldE from Cronobacter sakazakii (strain ATCC BAA-894) (Enterobacter sakazakii).